We begin with the raw amino-acid sequence, 329 residues long: Sex comb on midleg-like protein 1 (329 aa).

Positions 125–194 (NEVHESFSYP…SDFSEHNYQP (70 aa)) are disordered. Serine 138 carries the post-translational modification Phosphoserine. Residues 159 to 168 (FRMEEYQRAE) show a composition bias toward basic and acidic residues. Serine 238 is modified (phosphoserine). Positions 258–325 (WSVEAVVLFL…YYIDRLKQGK (68 aa)) constitute an SAM domain.

The protein belongs to the SCM family. Highly expressed in testis and pancreas. Preferentially expressed in the germ stem cells of testis.

Its subcellular location is the nucleus. In terms of biological role, putative Polycomb group (PcG) protein. PcG proteins act by forming multiprotein complexes, which are required to maintain the transcriptionally repressive state of homeotic genes throughout development. May be involved in spermatogenesis during sexual maturation. The chain is Sex comb on midleg-like protein 1 (SCML1) from Macaca mulatta (Rhesus macaque).